The following is a 278-amino-acid chain: Tryptophan synthase alpha chain (278 aa).

Catalysis depends on proton acceptor residues Glu61 and Asp72.

The protein belongs to the TrpA family. Tetramer of two alpha and two beta chains.

It carries out the reaction (1S,2R)-1-C-(indol-3-yl)glycerol 3-phosphate + L-serine = D-glyceraldehyde 3-phosphate + L-tryptophan + H2O. Its pathway is amino-acid biosynthesis; L-tryptophan biosynthesis; L-tryptophan from chorismate: step 5/5. Its function is as follows. The alpha subunit is responsible for the aldol cleavage of indoleglycerol phosphate to indole and glyceraldehyde 3-phosphate. This chain is Tryptophan synthase alpha chain, found in Shewanella oneidensis (strain ATCC 700550 / JCM 31522 / CIP 106686 / LMG 19005 / NCIMB 14063 / MR-1).